The primary structure comprises 61 residues: Large ribosomal subunit protein bL32 (61 aa).

Residues 1-16 (MAVPKRKTSPSKRGMR) show a composition bias toward basic residues. Residues 1 to 40 (MAVPKRKTSPSKRGMRRSADALKAPTYIEDKNSGELRRPH) form a disordered region. Basic and acidic residues predominate over residues 28-40 (IEDKNSGELRRPH).

The protein belongs to the bacterial ribosomal protein bL32 family.

The sequence is that of Large ribosomal subunit protein bL32 from Sinorhizobium medicae (strain WSM419) (Ensifer medicae).